Here is a 119-residue protein sequence, read N- to C-terminus: Large ribosomal subunit protein uL18 (119 aa).

Belongs to the universal ribosomal protein uL18 family. Part of the 50S ribosomal subunit; part of the 5S rRNA/L5/L18/L25 subcomplex. Contacts the 5S and 23S rRNAs.

In terms of biological role, this is one of the proteins that bind and probably mediate the attachment of the 5S RNA into the large ribosomal subunit, where it forms part of the central protuberance. This Chlorobium luteolum (strain DSM 273 / BCRC 81028 / 2530) (Pelodictyon luteolum) protein is Large ribosomal subunit protein uL18.